Consider the following 329-residue polypeptide: Pantothenate kinase (329 aa).

The disordered stretch occupies residues 1 to 22; that stretch reads MPAQGPSHGELPPADAGRESSP. 107-114 contacts ATP; that stretch reads GSVAVGKS.

The protein belongs to the prokaryotic pantothenate kinase family.

The protein resides in the cytoplasm. It catalyses the reaction (R)-pantothenate + ATP = (R)-4'-phosphopantothenate + ADP + H(+). The protein operates within cofactor biosynthesis; coenzyme A biosynthesis; CoA from (R)-pantothenate: step 1/5. This Nocardioides sp. (strain ATCC BAA-499 / JS614) protein is Pantothenate kinase.